Here is a 452-residue protein sequence, read N- to C-terminus: Adenylosuccinate synthetase 2 (452 aa).

Residues 19-25 (GDEGKAR) and 47-49 (GHT) each bind GTP. The active-site Proton acceptor is Asp20. Mg(2+) is bound by residues Asp20 and Gly47. Residues 20–23 (DEGK), 45–48 (NAGH), Thr131, Arg145, Gln223, Thr238, and Arg338 contribute to the IMP site. The active-site Proton donor is the His48. A substrate-binding site is contributed by 334–340 (TGTGRPR). GTP contacts are provided by residues Arg340, 366 to 368 (KCD), and 437 to 439 (GLG).

This sequence belongs to the adenylosuccinate synthetase family. As to quaternary structure, homodimer. Requires Mg(2+) as cofactor.

Its subcellular location is the cytoplasm. The enzyme catalyses IMP + L-aspartate + GTP = N(6)-(1,2-dicarboxyethyl)-AMP + GDP + phosphate + 2 H(+). It functions in the pathway purine metabolism; AMP biosynthesis via de novo pathway; AMP from IMP: step 1/2. In terms of biological role, plays an important role in the de novo pathway of purine nucleotide biosynthesis. Catalyzes the first committed step in the biosynthesis of AMP from IMP. This chain is Adenylosuccinate synthetase 2, found in Cupriavidus pinatubonensis (strain JMP 134 / LMG 1197) (Cupriavidus necator (strain JMP 134)).